We begin with the raw amino-acid sequence, 110 residues long: UPF0060 membrane protein Pfl01_4105 (110 aa).

The next 4 helical transmembrane spans lie at 5-25 (LWFF…WMWL), 28-48 (GKSA…ALLL), 59-79 (AYAA…AVVE), and 84-104 (LGSD…ILFG).

Belongs to the UPF0060 family.

The protein resides in the cell inner membrane. In Pseudomonas fluorescens (strain Pf0-1), this protein is UPF0060 membrane protein Pfl01_4105.